Consider the following 311-residue polypeptide: MATDGESISMSLAVATCVAMALFYVLILYVPTVILRLPSASSYTEFMIRRFICAAICTVASLVFTAFILPIKSWEASYILGVYGIRKDHLWQGVVYPLLLTSLVYAGSLVLKLFTLLESWKENGGGCSSFNYIRSFFQTIPASVLTSASNVSVWRNFIVAPVTEELVFRSCMIPLLLCAGFRINTAIFLCPVLFSLAHLNHFREMYIRHNRSYLRASLIVGLQLGYTVIFGAYASFLFIRTGHLAAPLFAHIFCNYMGLPVLYANGKGLVSAAFLGGVVGFVLLLFPLTKPLMYNDSTNDCPCWLGYCLWN.

3 helical membrane-spanning segments follow: residues valine 14 to isoleucine 34, phenylalanine 51 to isoleucine 71, and valine 94 to phenylalanine 114. The Proton donor/acceptor role is filled by glutamate 164. Residues isoleucine 173–leucine 193 traverse the membrane as a helical segment. Catalysis depends on histidine 198, which acts as the Proton donor/acceptor. Helical transmembrane passes span isoleucine 219–isoleucine 239, leucine 244–alanine 264, and glycine 268–leucine 288.

It belongs to the peptidase U48 family. As to expression, expressed in seeds, stems, leaves, flowers and siliques.

The protein resides in the endoplasmic reticulum membrane. It catalyses the reaction Hydrolyzes the peptide bond -P2-(S-farnesyl or geranylgeranyl)C-P1'-P2'-P3'-COOH where P1' and P2' are amino acids with aliphatic sidechains and P3' is any C-terminal residue.. With respect to regulation, inhibited in vitro by L-1-tosylamido-2-phenylethyl chloromethyl ketone (TPCK) and N-ethylmaleimide, but not by EDTA. Its function is as follows. Protease involved in the processing of a variety of prenylated proteins containing the C-terminal CAAX motif, where C is a cysteine modified with an isoprenoid lipid, A is an aliphatic amino acid and X is any C-terminal amino acid. Proteolytically removes the C-terminal three residues of farnesylated and geranylated proteins, leaving the prenylated cysteine as the new C-terminus. The substrate specificity is only partially overlapping with that of FACE1. CAAX processing is likely required for subcellular targeting of prenylated proteins to the plasma membrane. The chain is CAAX prenyl protease 2 (FACE2) from Arabidopsis thaliana (Mouse-ear cress).